A 454-amino-acid chain; its full sequence is tRNA(Ile)-lysidine synthase (454 aa).

Position 31–36 (31–36) interacts with ATP; the sequence is SGGADS.

This sequence belongs to the tRNA(Ile)-lysidine synthase family.

It is found in the cytoplasm. The enzyme catalyses cytidine(34) in tRNA(Ile2) + L-lysine + ATP = lysidine(34) in tRNA(Ile2) + AMP + diphosphate + H(+). Functionally, ligates lysine onto the cytidine present at position 34 of the AUA codon-specific tRNA(Ile) that contains the anticodon CAU, in an ATP-dependent manner. Cytidine is converted to lysidine, thus changing the amino acid specificity of the tRNA from methionine to isoleucine. The chain is tRNA(Ile)-lysidine synthase from Porphyromonas gingivalis (strain ATCC 33277 / DSM 20709 / CIP 103683 / JCM 12257 / NCTC 11834 / 2561).